Reading from the N-terminus, the 464-residue chain is Glutamate--tRNA ligase (464 aa).

Positions 9–19 (PSPTGYLHIGG) match the 'HIGH' region motif. The short motif at 242-246 (KISKR) is the 'KMSKS' region element. Lys245 lines the ATP pocket.

It belongs to the class-I aminoacyl-tRNA synthetase family. Glutamate--tRNA ligase type 1 subfamily. In terms of assembly, monomer.

The protein localises to the cytoplasm. The enzyme catalyses tRNA(Glu) + L-glutamate + ATP = L-glutamyl-tRNA(Glu) + AMP + diphosphate. In terms of biological role, catalyzes the attachment of glutamate to tRNA(Glu) in a two-step reaction: glutamate is first activated by ATP to form Glu-AMP and then transferred to the acceptor end of tRNA(Glu). This is Glutamate--tRNA ligase from Neisseria meningitidis serogroup A / serotype 4A (strain DSM 15465 / Z2491).